Consider the following 292-residue polypeptide: Protein rogdi homolog (292 aa).

Positions 1 to 12 are enriched in polar residues; that stretch reads MEVQSLTITTNY. The tract at residues 1–25 is disordered; sequence MEVQSLTITTNYPPKPASPNPQDIR.

The protein belongs to the rogdi family.

It is found in the nucleus envelope. This chain is Protein rogdi homolog, found in Caenorhabditis elegans.